The following is a 408-amino-acid chain: tRNA(Ile)-lysidine synthase (408 aa).

27-32 serves as a coordination point for ATP; it reads SGGGDS.

The protein belongs to the tRNA(Ile)-lysidine synthase family.

The protein localises to the cytoplasm. The enzyme catalyses cytidine(34) in tRNA(Ile2) + L-lysine + ATP = lysidine(34) in tRNA(Ile2) + AMP + diphosphate + H(+). Ligates lysine onto the cytidine present at position 34 of the AUA codon-specific tRNA(Ile) that contains the anticodon CAU, in an ATP-dependent manner. Cytidine is converted to lysidine, thus changing the amino acid specificity of the tRNA from methionine to isoleucine. In Caulobacter vibrioides (strain ATCC 19089 / CIP 103742 / CB 15) (Caulobacter crescentus), this protein is tRNA(Ile)-lysidine synthase.